An 83-amino-acid polypeptide reads, in one-letter code: Cytochrome b559 subunit alpha (83 aa).

A helical membrane pass occupies residues valine 21–tryptophan 35. Histidine 23 provides a ligand contact to heme.

It belongs to the PsbE/PsbF family. In terms of assembly, heterodimer of an alpha subunit and a beta subunit. PSII is composed of 1 copy each of membrane proteins PsbA, PsbB, PsbC, PsbD, PsbE, PsbF, PsbH, PsbI, PsbJ, PsbK, PsbL, PsbM, PsbT, PsbX, PsbY, PsbZ, Psb30/Ycf12, at least 3 peripheral proteins of the oxygen-evolving complex and a large number of cofactors. It forms dimeric complexes. Heme b serves as cofactor.

The protein localises to the plastid. The protein resides in the chloroplast thylakoid membrane. This b-type cytochrome is tightly associated with the reaction center of photosystem II (PSII). PSII is a light-driven water:plastoquinone oxidoreductase that uses light energy to abstract electrons from H(2)O, generating O(2) and a proton gradient subsequently used for ATP formation. It consists of a core antenna complex that captures photons, and an electron transfer chain that converts photonic excitation into a charge separation. In Phalaenopsis aphrodite subsp. formosana (Moth orchid), this protein is Cytochrome b559 subunit alpha.